A 140-amino-acid chain; its full sequence is Nucleoside diphosphate kinase (140 aa).

Residues Lys11, Phe59, Arg87, Thr93, Arg104, and Asn114 each contribute to the ATP site. The active-site Pros-phosphohistidine intermediate is the His117.

It belongs to the NDK family. As to quaternary structure, homotetramer. Requires Mg(2+) as cofactor.

It is found in the cytoplasm. The catalysed reaction is a 2'-deoxyribonucleoside 5'-diphosphate + ATP = a 2'-deoxyribonucleoside 5'-triphosphate + ADP. It carries out the reaction a ribonucleoside 5'-diphosphate + ATP = a ribonucleoside 5'-triphosphate + ADP. Its function is as follows. Major role in the synthesis of nucleoside triphosphates other than ATP. The ATP gamma phosphate is transferred to the NDP beta phosphate via a ping-pong mechanism, using a phosphorylated active-site intermediate. This Rhodovulum sulfidophilum (Rhodobacter sulfidophilus) protein is Nucleoside diphosphate kinase.